The primary structure comprises 662 residues: UvrABC system protein B (662 aa).

The region spanning 31 to 188 (DNIEGGEKAQ…NDLVDIQFER (158 aa)) is the Helicase ATP-binding domain. 44–51 (GATGTGKT) is an ATP binding site. The short motif at 97–120 (YYDYYQPEAYVPSSDTYIEKDSSV) is the Beta-hairpin element. In terms of domain architecture, Helicase C-terminal spans 435-601 (QIDDLLGEIN…TIKKEIRDLI (167 aa)). A UVR domain is found at 626–661 (KELVKKLEKQMQEAVEVLDFELAAQIRDMMLEVKAL).

It belongs to the UvrB family. In terms of assembly, forms a heterotetramer with UvrA during the search for lesions. Interacts with UvrC in an incision complex.

The protein resides in the cytoplasm. The UvrABC repair system catalyzes the recognition and processing of DNA lesions. A damage recognition complex composed of 2 UvrA and 2 UvrB subunits scans DNA for abnormalities. Upon binding of the UvrA(2)B(2) complex to a putative damaged site, the DNA wraps around one UvrB monomer. DNA wrap is dependent on ATP binding by UvrB and probably causes local melting of the DNA helix, facilitating insertion of UvrB beta-hairpin between the DNA strands. Then UvrB probes one DNA strand for the presence of a lesion. If a lesion is found the UvrA subunits dissociate and the UvrB-DNA preincision complex is formed. This complex is subsequently bound by UvrC and the second UvrB is released. If no lesion is found, the DNA wraps around the other UvrB subunit that will check the other stand for damage. In Streptococcus pneumoniae serotype 19F (strain G54), this protein is UvrABC system protein B.